Reading from the N-terminus, the 520-residue chain is Phospholipase C A (520 aa).

The tat-type signal signal peptide spans 1–38; the sequence is MSASPLLGMSRREFLTKLTGAGAAAFLMDWAAPVIEKA.

This sequence belongs to the bacterial phospholipase C family. Predicted to be exported by the Tat system. The position of the signal peptide cleavage has not been experimentally proven.

Its subcellular location is the secreted. The protein resides in the cell wall. It carries out the reaction a 1,2-diacyl-sn-glycero-3-phosphocholine + H2O = phosphocholine + a 1,2-diacyl-sn-glycerol + H(+). In terms of biological role, involved in virulence. Induces cytotoxic effects on mouse macrophage cell lines, via direct or indirect enzymatic hydrolysis of cell membrane phospholipids. Hydrolyzes phosphatidylcholine. The sequence is that of Phospholipase C A from Mycobacterium tuberculosis (strain CDC 1551 / Oshkosh).